The following is a 229-amino-acid chain: MAGHDSGNAKRGRSPSFGVFVRKPVERAPAKGASDGAVDSQAIRIDAAQSWPDDAVEVGAVVDAYGLKGWVKLAAHAGAGRGGDALLKARDWWLQKGAERKFARVTQAKLHGDTVVAHPGGSVDRDTALALRGARVFVRRGDFPALAADEFYWVDLIGLDVVNEAGVALGKIADMIDNGVHSIMRVEYPATGKDGRPKTGERLIPFVGVYVKAVEQAAGRVVVDWEADY.

Residues 1-21 (MAGHDSGNAKRGRSPSFGVFV) form a disordered region. Positions 148–229 (ADEFYWVDLI…RVVVDWEADY (82 aa)) constitute a PRC barrel domain.

This sequence belongs to the RimM family. In terms of assembly, binds ribosomal protein uS19.

The protein resides in the cytoplasm. Its function is as follows. An accessory protein needed during the final step in the assembly of 30S ribosomal subunit, possibly for assembly of the head region. Essential for efficient processing of 16S rRNA. May be needed both before and after RbfA during the maturation of 16S rRNA. It has affinity for free ribosomal 30S subunits but not for 70S ribosomes. The polypeptide is Ribosome maturation factor RimM (Burkholderia pseudomallei (strain 1106a)).